The primary structure comprises 200 residues: Serine/arginine-rich splicing factor RSZ23 (200 aa).

An RRM domain is found at 2–71 (ARVYVGNLDP…NGWRVELSTK (70 aa)). The CCHC-type zinc-finger motif lies at 86 to 103 (MKCYECGEPGHFARECRL). A disordered region spans residues 105–200 (IGSGGLGSGR…REESPYANNA (96 aa)). Residues 113–139 (GRRRSRSRSRSPRYRGRSRSRSPRYRR) are compositionally biased toward basic residues.

The protein belongs to the splicing factor SR family. Extensively phosphorylated on serine residues in the RS domain. As to expression, expressed in roots, leaves and immature seeds.

The protein localises to the nucleus. In terms of biological role, involved in pre-mRNA splicing. In protoplast assay, enhances splicing efficiency of WAXY intron 1 and alters the selection of the 5'-splice sites by stimulating site 1 (proximal site). This is Serine/arginine-rich splicing factor RSZ23 (RSZ23) from Oryza sativa subsp. japonica (Rice).